Consider the following 179-residue polypeptide: FAD-dependent monooxygenase nscC (179 aa).

The N-terminal stretch at 1 to 21 (MGKQQETILIIGAGISGLATS) is a signal peptide. FAD-binding residues include Glu35 and Ala46. N-linked (GlcNAc...) asparagine glycosylation is present at Asn92. Arg119 contacts FAD. N-linked (GlcNAc...) asparagine glycosylation is present at Asn170.

Belongs to the paxM FAD-dependent monooxygenase family. Requires FAD as cofactor.

Its pathway is secondary metabolite biosynthesis. FAD-dependent monooxygenase; part of the gene cluster that mediates the biosynthesis of neosartoricin B, a prenylated anthracenone that probably exhibits T-cell antiproliferative activity, suggestive of a physiological role as an immunosuppressive agent. The non-reducing polyketide synthase nscA probably synthesizes and cyclizes the decaketide backbone. The hydrolase nscB then mediates the product release through hydrolysis followed by spontaneous decarboxylation. The prenyltransferase nscD catalyzes the addition of the dimethylallyl group to the aromatic C5. The FAD-dependent monooxygenase nscC is then responsible for the stereospecific hydroxylation at C2. Neosartoricin B can be converted into two additional compounds neosartoricins C and D. Neosartoricin C is a spirocyclic compound that is cyclized through the attack of C3 hydroxyl on C14, followed by dehydration. On the other hand, neosartoricin D is a further cyclized compound in which attack of C2 on C14 in neosartoricin C results in the formation of the acetal-containing dioxabicyclo-octanone ring. Both of these compounds are novel and possibly represent related metabolites of the gene cluster. This chain is FAD-dependent monooxygenase nscC, found in Trichophyton equinum (strain ATCC MYA-4606 / CBS 127.97) (Horse ringworm fungus).